Here is a 264-residue protein sequence, read N- to C-terminus: S-methyl-5'-thioadenosine phosphorylase (264 aa).

Residues serine 14 and 55–56 (RH) each bind phosphate. Substrate is bound at residue methionine 180. Threonine 181 serves as a coordination point for phosphate. 204–206 (DVD) lines the substrate pocket.

It belongs to the PNP/MTAP phosphorylase family. MTAP subfamily. Homodimer.

It carries out the reaction S-methyl-5'-thioadenosine + phosphate = 5-(methylsulfanyl)-alpha-D-ribose 1-phosphate + adenine. It participates in amino-acid biosynthesis; L-methionine biosynthesis via salvage pathway; S-methyl-5-thio-alpha-D-ribose 1-phosphate from S-methyl-5'-thioadenosine (phosphorylase route): step 1/1. Not inhibited by adenosine, potently inhibited by MT-DADMe-immucillin A. Functionally, catalyzes the reversible phosphorylation of S-methyl-5'-thioadenosine (MTA) to adenine and 5-methylthioribose-1-phosphate. Involved in the breakdown of MTA, a major by-product of polyamine biosynthesis. Responsible for the first step in the methionine salvage pathway after MTA has been generated from S-adenosylmethionine. Prefers MTA, with 2% activity on adenosine, 0.8% activity on S-adenosyl-L-homocysteine and no activity on other tested nucleosides. The chain is S-methyl-5'-thioadenosine phosphorylase from Mycobacterium tuberculosis (strain ATCC 25618 / H37Rv).